Consider the following 215-residue polypeptide: 3-isopropylmalate dehydratase small subunit (215 aa).

The protein belongs to the LeuD family. LeuD type 1 subfamily. Heterodimer of LeuC and LeuD.

It catalyses the reaction (2R,3S)-3-isopropylmalate = (2S)-2-isopropylmalate. It functions in the pathway amino-acid biosynthesis; L-leucine biosynthesis; L-leucine from 3-methyl-2-oxobutanoate: step 2/4. Its function is as follows. Catalyzes the isomerization between 2-isopropylmalate and 3-isopropylmalate, via the formation of 2-isopropylmaleate. The sequence is that of 3-isopropylmalate dehydratase small subunit from Xylella fastidiosa (strain M12).